Consider the following 208-residue polypeptide: Imidazole glycerol phosphate synthase subunit HisH (208 aa).

One can recognise a Glutamine amidotransferase type-1 domain in the interval 1–206; the sequence is MIVIIDYDTG…KEVIRSCKSS (206 aa). Cys79 serves as the catalytic Nucleophile. Residues His181 and Glu183 contribute to the active site.

In terms of assembly, heterodimer of HisH and HisF.

The protein resides in the cytoplasm. The catalysed reaction is 5-[(5-phospho-1-deoxy-D-ribulos-1-ylimino)methylamino]-1-(5-phospho-beta-D-ribosyl)imidazole-4-carboxamide + L-glutamine = D-erythro-1-(imidazol-4-yl)glycerol 3-phosphate + 5-amino-1-(5-phospho-beta-D-ribosyl)imidazole-4-carboxamide + L-glutamate + H(+). The enzyme catalyses L-glutamine + H2O = L-glutamate + NH4(+). The protein operates within amino-acid biosynthesis; L-histidine biosynthesis; L-histidine from 5-phospho-alpha-D-ribose 1-diphosphate: step 5/9. Functionally, IGPS catalyzes the conversion of PRFAR and glutamine to IGP, AICAR and glutamate. The HisH subunit catalyzes the hydrolysis of glutamine to glutamate and ammonia as part of the synthesis of IGP and AICAR. The resulting ammonia molecule is channeled to the active site of HisF. This Listeria welshimeri serovar 6b (strain ATCC 35897 / DSM 20650 / CCUG 15529 / CIP 8149 / NCTC 11857 / SLCC 5334 / V8) protein is Imidazole glycerol phosphate synthase subunit HisH.